The primary structure comprises 352 residues: (2E,6E)-farnesyl diphosphate synthase (352 aa).

Positions 43, 46, and 77 each coordinate isopentenyl diphosphate. Positions 84 and 88 each coordinate Mg(2+). The DDXXD motif signature appears at 84–88; sequence DDLID. R94 provides a ligand contact to isopentenyl diphosphate. A DDXXD motif motif is present at residues 236–240; it reads DDVLG.

It belongs to the FPP/GGPP synthase family. Mg(2+) serves as cofactor.

It carries out the reaction isopentenyl diphosphate + dimethylallyl diphosphate = (2E)-geranyl diphosphate + diphosphate. The enzyme catalyses isopentenyl diphosphate + (2E)-geranyl diphosphate = (2E,6E)-farnesyl diphosphate + diphosphate. Its pathway is isoprenoid biosynthesis; geranyl diphosphate biosynthesis; geranyl diphosphate from dimethylallyl diphosphate and isopentenyl diphosphate: step 1/1. The protein operates within isoprenoid biosynthesis; farnesyl diphosphate biosynthesis; farnesyl diphosphate from geranyl diphosphate and isopentenyl diphosphate. Catalyzes the sequential condensations of isopentenyl pyrophosphate (IPP) with dimethylallyl diphosphate (DMAPP) to yield geranyl diphosphate (GPP) and with GPP to yield (2E,6E)-farnesyl diphosphate (E,E-FPP). In Mycobacterium tuberculosis (strain ATCC 25618 / H37Rv), this protein is (2E,6E)-farnesyl diphosphate synthase.